The chain runs to 706 residues: Envelope glycoprotein H (706 aa).

Positions 1–18 are cleaved as a signal peptide; it reads MQLLCVFCLVLLWEVGAA. Residues 19-682 lie on the Virion surface side of the membrane; sequence SLSEVKLHLD…LYEERAHVVL (664 aa). The N-linked (GlcNAc...) asparagine; by host glycan is linked to Asn60. The interaction with gL stretch occupies residues 165–229; sequence DKFQYTGAMT…QSGDYSLVIV (65 aa). Cys278 and Cys335 are joined by a disulfide. Residue Asn435 is glycosylated (N-linked (GlcNAc...) asparagine; by host). 2 disulfides stabilise this stretch: Cys454-Cys478 and Cys534-Cys587. N-linked (GlcNAc...) asparagine; by host glycans are attached at residues Asn549 and Asn604. Residues Cys612 and Cys615 are joined by a disulfide bond. The N-linked (GlcNAc...) asparagine; by host glycan is linked to Asn664. A helical membrane pass occupies residues 683–703; the sequence is AIILYFIAFALGIFLVHKIVM. The Intravirion portion of the chain corresponds to 704-706; sequence FFL.

It belongs to the herpesviridae glycoprotein H family. As to quaternary structure, interacts with glycoprotein L (gL); this interaction is necessary for the correct processing and cell surface expression of gH. The heterodimer gH/gL seems to interact with gB trimers during fusion. The heterodimer gH/gL interacts with host EPHA2 to facilitate virus internalization and fusion. Interacts with glycoprotein 42/BZLF2. Post-translationally, N-glycosylated, O-glycosylated, and sialylated.

It localises to the virion membrane. The protein resides in the host cell membrane. Its subcellular location is the host endosome membrane. Functionally, the heterodimer glycoprotein H-glycoprotein L is required for the fusion of viral and plasma membranes leading to virus entry into the host cell. Following initial binding to host receptor, membrane fusion is mediated by the fusion machinery composed of gB and the heterodimer gH/gL. May also be involved in the fusion between the virion envelope and the outer nuclear membrane during virion morphogenesis. The heterodimer gH/gL targets also host EPHA2 to promote viral entry. The chain is Envelope glycoprotein H from Homo sapiens (Human).